The sequence spans 1044 residues: Probable translation initiation factor IF-2 (1044 aa).

The DOD-type homing endonuclease domain maps to 173–265 (FAGTIFGREN…LSLILLRLGI (93 aa)). The region spanning 451–668 (TTETHNFIAN…LIAGLSQKYL (218 aa)) is the tr-type G domain. Residues 524–528 (DTPGH) and 578–581 (NKID) contribute to the GTP site.

It belongs to the TRAFAC class translation factor GTPase superfamily. Classic translation factor GTPase family. IF-2 subfamily. Post-translationally, this protein undergoes a protein self splicing that involves a post-translational excision of the intervening region (intein) followed by peptide ligation.

Functionally, function in general translation initiation by promoting the binding of the formylmethionine-tRNA to ribosomes. Seems to function along with eIF-2. In Pyrococcus horikoshii (strain ATCC 700860 / DSM 12428 / JCM 9974 / NBRC 100139 / OT-3), this protein is Probable translation initiation factor IF-2 (infB).